Here is a 456-residue protein sequence, read N- to C-terminus: Exodeoxyribonuclease 7 large subunit (456 aa).

Belongs to the XseA family. In terms of assembly, heterooligomer composed of large and small subunits.

It localises to the cytoplasm. It catalyses the reaction Exonucleolytic cleavage in either 5'- to 3'- or 3'- to 5'-direction to yield nucleoside 5'-phosphates.. Its function is as follows. Bidirectionally degrades single-stranded DNA into large acid-insoluble oligonucleotides, which are then degraded further into small acid-soluble oligonucleotides. In Shigella flexneri serotype 5b (strain 8401), this protein is Exodeoxyribonuclease 7 large subunit.